Reading from the N-terminus, the 245-residue chain is Chlorophyll a-b binding protein 1B-21, chloroplastic (245 aa).

The transit peptide at 1-44 (MASSSGLRSCSAVGVPSLLAPSSRSGRSGLPFCAYATTSGRVTM) directs the protein to the chloroplast. Trp48 is a binding site for chlorophyll b. Residues Phe68, Glu87, and His90 each contribute to the chlorophyll a site. Arg92 lines the chlorophyll b pocket. A helical membrane pass occupies residues 93-113 (WAMLCVPGVLVPEALGLGNWV). Residue Leu129 coordinates chlorophyll a. The chain crosses the membrane as a helical span at residues 132–152 (PVPWGNLPTILAIEFLAIAFA). Chlorophyll b contacts are provided by Val133, Glu153, and Arg156. 6 residues coordinate chlorophyll a: Lys190, Glu191, Asn194, Arg196, Gln208, and His224.

This sequence belongs to the light-harvesting chlorophyll a/b-binding (LHC) protein family. The LHC complex consists of chlorophyll a-b binding proteins. Binds at least 14 chlorophylls (8 Chl-a and 6 Chl-b) and carotenoids such as lutein and neoxanthin. serves as cofactor. Photoregulated by reversible phosphorylation of its threonine residues.

It is found in the plastid. Its subcellular location is the chloroplast thylakoid membrane. Its function is as follows. The light-harvesting complex (LHC) functions as a light receptor, it captures and delivers excitation energy to photosystems with which it is closely associated. This chain is Chlorophyll a-b binding protein 1B-21, chloroplastic (LHC Ib-21), found in Hordeum vulgare (Barley).